A 535-amino-acid polypeptide reads, in one-letter code: Pentatricopeptide repeat-containing protein At5g16420, mitochondrial (535 aa).

The transit peptide at 1-28 (MFLSRVNPTRFPPFVASRRLFSASASAA) directs the protein to the mitochondrion. PPR repeat units lie at residues 82–112 (NYDT…LRNS), 119–153 (GENL…GVKR), 154–189 (SVRS…GITP), 190–224 (NIFT…GLVP), 225–259 (NLVT…GWYP), 260–294 (DATT…EIEP), 295–329 (NEVT…SFMP), 330–364 (DSSL…NCMP), 365–395 (DNAL…FEKG), 399–433 (SLLT…KCKP), 434–468 (NAFT…GCFP), and 469–503 (NKTT…GKVD).

The protein belongs to the PPR family. P subfamily.

Its subcellular location is the mitochondrion. This chain is Pentatricopeptide repeat-containing protein At5g16420, mitochondrial, found in Arabidopsis thaliana (Mouse-ear cress).